Reading from the N-terminus, the 688-residue chain is Elongation factor G (688 aa).

Residues 8-282 (EKFRNFGIMA…GVVDYLPSPL (275 aa)) enclose the tr-type G domain. GTP-binding positions include 17–24 (AHIDAGKT), 81–85 (DTPGH), and 135–138 (NKMD).

This sequence belongs to the TRAFAC class translation factor GTPase superfamily. Classic translation factor GTPase family. EF-G/EF-2 subfamily.

The protein resides in the cytoplasm. Functionally, catalyzes the GTP-dependent ribosomal translocation step during translation elongation. During this step, the ribosome changes from the pre-translocational (PRE) to the post-translocational (POST) state as the newly formed A-site-bound peptidyl-tRNA and P-site-bound deacylated tRNA move to the P and E sites, respectively. Catalyzes the coordinated movement of the two tRNA molecules, the mRNA and conformational changes in the ribosome. This is Elongation factor G from Clostridium perfringens (strain ATCC 13124 / DSM 756 / JCM 1290 / NCIMB 6125 / NCTC 8237 / Type A).